The chain runs to 319 residues: N-acetyl-D-glucosamine kinase (319 aa).

T14 is an ATP binding site. 2 residues coordinate substrate: N37 and D113. T135 serves as a coordination point for ATP. Residues 153–155 (GWG) and D160 contribute to the substrate site. A220 serves as a coordination point for ATP.

The protein belongs to the eukaryotic-type N-acetylglucosamine kinase family. In terms of assembly, homodimer.

The catalysed reaction is N-acetyl-D-glucosamine + ATP = N-acetyl-D-glucosamine 6-phosphate + ADP + H(+). Its function is as follows. Converts N-acetylglucosamine (GlcNAc), a major component of complex carbohydrates, into GlcNAc 6-phosphate. Also has ManNAc kinase activity. The sequence is that of N-acetyl-D-glucosamine kinase (nagk) from Dictyostelium discoideum (Social amoeba).